Reading from the N-terminus, the 83-residue chain is Greglin (83 aa).

Serine 8, serine 11, and serine 15 each carry phosphoserine. 4 disulfides stabilise this stretch: cysteine 21–cysteine 55, cysteine 25–cysteine 48, cysteine 33–cysteine 69, and cysteine 53–cysteine 76.

Serine protease inhibitor. Inhibits porcine pancreatic elastase with a Ki of 58.3 nM, human neutrophil elastase with a Ki of 3.6 nM, cathepsin G with a Ki of 153.5 nM, chymotrypsin with a Ki of 26.7 nM and subtilisin with a Ki of 0.68 nM. Does not inhibit neutrophil protease 3 or pancreatic trypsin. This chain is Greglin, found in Schistocerca gregaria (Desert locust).